A 388-amino-acid chain; its full sequence is Chorismate synthase (388 aa).

Residues R39 and R45 each contribute to the NADP(+) site. FMN contacts are provided by residues 130-132 (RSS), 251-252 (NA), G296, 311-315 (KPIPT), and R337.

The protein belongs to the chorismate synthase family. In terms of assembly, homotetramer. The cofactor is FMNH2.

The catalysed reaction is 5-O-(1-carboxyvinyl)-3-phosphoshikimate = chorismate + phosphate. It functions in the pathway metabolic intermediate biosynthesis; chorismate biosynthesis; chorismate from D-erythrose 4-phosphate and phosphoenolpyruvate: step 7/7. Catalyzes the anti-1,4-elimination of the C-3 phosphate and the C-6 proR hydrogen from 5-enolpyruvylshikimate-3-phosphate (EPSP) to yield chorismate, which is the branch point compound that serves as the starting substrate for the three terminal pathways of aromatic amino acid biosynthesis. This reaction introduces a second double bond into the aromatic ring system. The protein is Chorismate synthase of Streptococcus pneumoniae (strain 70585).